We begin with the raw amino-acid sequence, 353 residues long: Holliday junction branch migration complex subunit RuvB (353 aa).

Positions 4–190 (HYIRFKIMTN…FGIPMRLNFY (187 aa)) are large ATPase domain (RuvB-L). Residues Ile29, Arg30, Gly71, Lys74, Thr75, Thr76, 137–139 (EDF), Arg180, Tyr190, and Arg227 contribute to the ATP site. Thr75 contributes to the Mg(2+) binding site. The segment at 191–261 (NTEELKKVLN…ISDFGLNRLE (71 aa)) is small ATPAse domain (RuvB-S). The interval 264 to 353 (RIGLDSNDYR…HQFNIFNEHE (90 aa)) is head domain (RuvB-H). DNA is bound by residues Arg300, Arg319, and Arg324.

It belongs to the RuvB family. As to quaternary structure, homohexamer. Forms an RuvA(8)-RuvB(12)-Holliday junction (HJ) complex. HJ DNA is sandwiched between 2 RuvA tetramers; dsDNA enters through RuvA and exits via RuvB. An RuvB hexamer assembles on each DNA strand where it exits the tetramer. Each RuvB hexamer is contacted by two RuvA subunits (via domain III) on 2 adjacent RuvB subunits; this complex drives branch migration. In the full resolvosome a probable DNA-RuvA(4)-RuvB(12)-RuvC(2) complex forms which resolves the HJ.

It is found in the cytoplasm. The enzyme catalyses ATP + H2O = ADP + phosphate + H(+). Its function is as follows. The RuvA-RuvB-RuvC complex processes Holliday junction (HJ) DNA during genetic recombination and DNA repair, while the RuvA-RuvB complex plays an important role in the rescue of blocked DNA replication forks via replication fork reversal (RFR). RuvA specifically binds to HJ cruciform DNA, conferring on it an open structure. The RuvB hexamer acts as an ATP-dependent pump, pulling dsDNA into and through the RuvAB complex. RuvB forms 2 homohexamers on either side of HJ DNA bound by 1 or 2 RuvA tetramers; 4 subunits per hexamer contact DNA at a time. Coordinated motions by a converter formed by DNA-disengaged RuvB subunits stimulates ATP hydrolysis and nucleotide exchange. Immobilization of the converter enables RuvB to convert the ATP-contained energy into a lever motion, pulling 2 nucleotides of DNA out of the RuvA tetramer per ATP hydrolyzed, thus driving DNA branch migration. The RuvB motors rotate together with the DNA substrate, which together with the progressing nucleotide cycle form the mechanistic basis for DNA recombination by continuous HJ branch migration. Branch migration allows RuvC to scan DNA until it finds its consensus sequence, where it cleaves and resolves cruciform DNA. In Rickettsia massiliae (strain Mtu5), this protein is Holliday junction branch migration complex subunit RuvB.